The chain runs to 668 residues: tRNA 5-methylaminomethyl-2-thiouridine biosynthesis bifunctional protein MnmC (668 aa).

The tract at residues 1–245 (MKHYAIQPAN…KREMLCGVME (245 aa)) is tRNA (mnm(5)s(2)U34)-methyltransferase. The tract at residues 270 to 668 (IGGGIASALL…LLKGKAVKAG (399 aa)) is FAD-dependent cmnm(5)s(2)U34 oxidoreductase.

In the N-terminal section; belongs to the methyltransferase superfamily. tRNA (mnm(5)s(2)U34)-methyltransferase family. This sequence in the C-terminal section; belongs to the DAO family. Requires FAD as cofactor.

It is found in the cytoplasm. It catalyses the reaction 5-aminomethyl-2-thiouridine(34) in tRNA + S-adenosyl-L-methionine = 5-methylaminomethyl-2-thiouridine(34) in tRNA + S-adenosyl-L-homocysteine + H(+). In terms of biological role, catalyzes the last two steps in the biosynthesis of 5-methylaminomethyl-2-thiouridine (mnm(5)s(2)U) at the wobble position (U34) in tRNA. Catalyzes the FAD-dependent demodification of cmnm(5)s(2)U34 to nm(5)s(2)U34, followed by the transfer of a methyl group from S-adenosyl-L-methionine to nm(5)s(2)U34, to form mnm(5)s(2)U34. The protein is tRNA 5-methylaminomethyl-2-thiouridine biosynthesis bifunctional protein MnmC of Escherichia coli (strain SMS-3-5 / SECEC).